The primary structure comprises 295 residues: Ribosomal protein L11 methyltransferase (295 aa).

T146, G167, D189, and N231 together coordinate S-adenosyl-L-methionine.

This sequence belongs to the methyltransferase superfamily. PrmA family.

It localises to the cytoplasm. It catalyses the reaction L-lysyl-[protein] + 3 S-adenosyl-L-methionine = N(6),N(6),N(6)-trimethyl-L-lysyl-[protein] + 3 S-adenosyl-L-homocysteine + 3 H(+). Methylates ribosomal protein L11. The protein is Ribosomal protein L11 methyltransferase of Vibrio cholerae serotype O1 (strain M66-2).